The following is a 304-amino-acid chain: Acetylglutamate kinase (304 aa).

Residues 77–78 (GG), arginine 99, and asparagine 193 each bind substrate.

The protein belongs to the acetylglutamate kinase family. ArgB subfamily.

It localises to the cytoplasm. It carries out the reaction N-acetyl-L-glutamate + ATP = N-acetyl-L-glutamyl 5-phosphate + ADP. The protein operates within amino-acid biosynthesis; L-arginine biosynthesis; N(2)-acetyl-L-ornithine from L-glutamate: step 2/4. Catalyzes the ATP-dependent phosphorylation of N-acetyl-L-glutamate. This chain is Acetylglutamate kinase, found in Chlorobium limicola (strain DSM 245 / NBRC 103803 / 6330).